The chain runs to 244 residues: 3-oxoacyl-[acyl-carrier-protein] reductase FabG (244 aa).

Residues 9–12 (GASR), 60–61 (NV), and Asn-87 each bind NADP(+). Position 139 (Ser-139) interacts with substrate. The Proton acceptor role is filled by Tyr-152. Residues 152-156 (YVATK) and Ile-185 contribute to the NADP(+) site.

The protein belongs to the short-chain dehydrogenases/reductases (SDR) family. Homotetramer.

The enzyme catalyses a (3R)-hydroxyacyl-[ACP] + NADP(+) = a 3-oxoacyl-[ACP] + NADPH + H(+). It participates in lipid metabolism; fatty acid biosynthesis. Its function is as follows. Catalyzes the NADPH-dependent reduction of beta-ketoacyl-ACP substrates to beta-hydroxyacyl-ACP products, the first reductive step in the elongation cycle of fatty acid biosynthesis. The polypeptide is 3-oxoacyl-[acyl-carrier-protein] reductase FabG (fabG) (Staphylococcus epidermidis (strain ATCC 35984 / DSM 28319 / BCRC 17069 / CCUG 31568 / BM 3577 / RP62A)).